We begin with the raw amino-acid sequence, 127 residues long: Large ribosomal subunit protein bL12 (127 aa).

The protein belongs to the bacterial ribosomal protein bL12 family. Homodimer. Part of the ribosomal stalk of the 50S ribosomal subunit. Forms a multimeric L10(L12)X complex, where L10 forms an elongated spine to which 2 to 4 L12 dimers bind in a sequential fashion. Binds GTP-bound translation factors.

Forms part of the ribosomal stalk which helps the ribosome interact with GTP-bound translation factors. Is thus essential for accurate translation. The protein is Large ribosomal subunit protein bL12 of Symbiobacterium thermophilum (strain DSM 24528 / JCM 14929 / IAM 14863 / T).